Consider the following 142-residue polypeptide: Hemoglobin subunit alpha (142 aa).

Positions histidine 2–arginine 142 constitute a Globin domain. Heme b contacts are provided by histidine 59 and histidine 88.

It belongs to the globin family. Heterotetramer of two alpha chains and two beta chains. As to expression, red blood cells.

Functionally, involved in oxygen transport from the lung to the various peripheral tissues. This is Hemoglobin subunit alpha (hba-A) from Xenopus tropicalis (Western clawed frog).